A 340-amino-acid chain; its full sequence is Putative transport protein AF_1800 (340 aa).

7 helical membrane-spanning segments follow: residues 7–27, 57–77, 140–160, 193–213, 225–245, 260–280, and 290–310; these read LVLLLSILVVLALTFYFFTPL, SVIATAIVILPISVLMFYGLI, TLLILNFFISIVVCFYALADM, LWFGNFVVAILIGLVSLPFFL, GLMFLAALIPIFAEWMIILPV, FLLIGVVFLYVLPELILRPYF, and LVLMLAFIGGGLVGGISGFFI.

The protein belongs to the autoinducer-2 exporter (AI-2E) (TC 2.A.86) family.

The protein localises to the cell membrane. The protein is Putative transport protein AF_1800 of Archaeoglobus fulgidus (strain ATCC 49558 / DSM 4304 / JCM 9628 / NBRC 100126 / VC-16).